The following is a 417-amino-acid chain: 26S proteasome regulatory subunit RPN14 (417 aa).

WD repeat units follow at residues Ala-134 to Thr-173, Gly-176 to Thr-215, Ile-242 to Gln-281, Lys-285 to Gly-325, Asn-330 to Glu-371, and Ser-380 to Asn-416.

This sequence belongs to the WD repeat PAAF1/RPN14 family. As to quaternary structure, associates with the 19S proteasome regulatory particle (RP). Interacts directly with RPT5 and RPT6.

The protein localises to the cytoplasm. The protein resides in the nucleus. Its function is as follows. Acts as a regulatory subunit of the 26 proteasome which is involved in the ATP-dependent degradation of ubiquitinated proteins. Is not a genuine component of the 26S proteasome, but an auxiliary factor that interacts with the proteasomal ATPase of 19S regulatory particle (RP). Acts as a chaperone which regulates the highly structured assembly of the 19S regulatory particle. Involved in the substrate specificity of the 26S proteasome and is especially involved in the degradation of ubiquitinated GCN4. May contribute to the stability of the 26S proteasome in some stress conditions. The polypeptide is 26S proteasome regulatory subunit RPN14 (RPN14) (Saccharomyces cerevisiae (strain ATCC 204508 / S288c) (Baker's yeast)).